Here is a 424-residue protein sequence, read N- to C-terminus: Serine--tRNA ligase (424 aa).

L-serine is bound at residue threonine 231–glutamate 233. Position 262-264 (arginine 262–glutamate 264) interacts with ATP. Residue glutamate 285 participates in L-serine binding. Glutamate 349–serine 352 provides a ligand contact to ATP. Residue serine 385 coordinates L-serine.

The protein belongs to the class-II aminoacyl-tRNA synthetase family. Type-1 seryl-tRNA synthetase subfamily. As to quaternary structure, homodimer. The tRNA molecule binds across the dimer.

It localises to the cytoplasm. It catalyses the reaction tRNA(Ser) + L-serine + ATP = L-seryl-tRNA(Ser) + AMP + diphosphate + H(+). The catalysed reaction is tRNA(Sec) + L-serine + ATP = L-seryl-tRNA(Sec) + AMP + diphosphate + H(+). The protein operates within aminoacyl-tRNA biosynthesis; selenocysteinyl-tRNA(Sec) biosynthesis; L-seryl-tRNA(Sec) from L-serine and tRNA(Sec): step 1/1. In terms of biological role, catalyzes the attachment of serine to tRNA(Ser). Is also able to aminoacylate tRNA(Sec) with serine, to form the misacylated tRNA L-seryl-tRNA(Sec), which will be further converted into selenocysteinyl-tRNA(Sec). This is Serine--tRNA ligase from Bacillus cereus (strain G9842).